The primary structure comprises 133 residues: Ribonuclease P protein component (133 aa).

It belongs to the RnpA family. Consists of a catalytic RNA component (M1 or rnpB) and a protein subunit.

It catalyses the reaction Endonucleolytic cleavage of RNA, removing 5'-extranucleotides from tRNA precursor.. Functionally, RNaseP catalyzes the removal of the 5'-leader sequence from pre-tRNA to produce the mature 5'-terminus. It can also cleave other RNA substrates such as 4.5S RNA. The protein component plays an auxiliary but essential role in vivo by binding to the 5'-leader sequence and broadening the substrate specificity of the ribozyme. This Bartonella quintana (strain Toulouse) (Rochalimaea quintana) protein is Ribonuclease P protein component.